The chain runs to 315 residues: MEIIIISGRSGAGKSVALRALEDTGYYCVDNIPLDLLPQLTDILSQSQSSVAISLDIRNIPNSAHSLKQTLSTLQKHHQIKIIFLEADRATLIRRYSDSRRLHPLSLKDLSLEAAIDEEYRYLEPLIQHANLILDTTHLSTHSLAERLREFLRGNSEKELKIIVESFGFKYGIPLDADYVFDVRFLPNPHWDPTLRPMTGLEAPVAEFLNSHTEVNEFIYLTRHYIDTWLPMLEKNNRSYLTIAIGCTGGKHRSVYIAQQLGEYFQAKGKTVKIQHKSLERNKKIIKSAVIKTLFLLTALFLHAHRLYNFTRITA.

ATP is bound at residue 8–15 (GRSGAGKS). 56-59 (DIRN) is a GTP binding site.

This sequence belongs to the RapZ-like family.

Displays ATPase and GTPase activities. This Haemophilus influenzae (strain PittEE) protein is Nucleotide-binding protein CGSHiEE_06315.